Here is a 74-residue protein sequence, read N- to C-terminus: UPF0346 protein RBAM_019500 (74 aa).

Belongs to the UPF0346 family.

This is UPF0346 protein RBAM_019500 from Bacillus velezensis (strain DSM 23117 / BGSC 10A6 / LMG 26770 / FZB42) (Bacillus amyloliquefaciens subsp. plantarum).